Consider the following 503-residue polypeptide: Beta-mannosyltransferase 4 (503 aa).

Residues 1 to 24 (MKLDTQQISHLLSRQMYHLAPRKK) lie on the Cytoplasmic side of the membrane. The chain crosses the membrane as a helical span at residues 25 to 45 (LLIWGGSLGFVLLLLIVASSH). Residues 46 to 503 (QRIRSTILHR…QYCQRYGELH (458 aa)) are Extracellular-facing. N-linked (GlcNAc...) asparagine glycosylation is present at asparagine 468.

The protein belongs to the BMT family.

The protein localises to the membrane. Beta-mannosyltransferase involved in cell wall biosynthesis. Responsible for addition of a hexose to the beta-mannose chain. The polypeptide is Beta-mannosyltransferase 4 (BMT4) (Komagataella phaffii (strain ATCC 76273 / CBS 7435 / CECT 11047 / NRRL Y-11430 / Wegner 21-1) (Yeast)).